A 558-amino-acid polypeptide reads, in one-letter code: MNAPVPVPRVADFTCEKKPASGSRGMVVTNHPLASAAGAQILLAGGNAIDAAVASLFALTVAEPMMVGILGGGLSHIRLADGRHVVIDNLSTAPGKATAEMYECLSDEIGKQRDTRDRQNVVGAKAVAVPGALKGWCEALARFGTLPLAEVLQPAIGLAERGFVVTPYLSNCITDNAGDLARDPGLAAMLLPGGKPLQPGMRLVQSDYAASLKLIAAEGPDALYGGKLGRALTDYMAANGGLIDQADLANYRIELREPIRGSYRGYEIIGPPPPSSSGVHITQMLNILEGYDIGSLGFGSTDAVHLLAEALKIAFADRAVATADPAFVKVPVARLIDKAYADERRALIEMEQAKSWTAGLSGGESADTTHVTVADAMGNVVSATQTINGLFGACVQIPGTGMIANNYMYNFDPHPGRALSIAPGKRVFTSMAPMMALKEGRIAFALGLPGALRIFPSALQAIVNLIDHRMSLQEAVEAPRVWTEGGVLELEEAIPEAVAQALIARGHKVVRSPRVAGGMNAIAFNPDGTLTGAACWRADGTPVAISGGLARAGARFTI.

Thr368 (nucleophile) is an active-site residue.

This sequence belongs to the gamma-glutamyltransferase family. As to quaternary structure, dimer of two non-identical chains processed from the same precursor.

The catalysed reaction is (7R)-7-(4-carboxybutanamido)cephalosporanate + H2O = (7R)-7-aminocephalosporanate + glutarate. The enzyme catalyses an N-terminal (5-L-glutamyl)-[peptide] + an alpha-amino acid = 5-L-glutamyl amino acid + an N-terminal L-alpha-aminoacyl-[peptide]. It carries out the reaction glutathione + H2O = L-cysteinylglycine + L-glutamate. It catalyses the reaction an S-substituted glutathione + H2O = an S-substituted L-cysteinylglycine + L-glutamate. In terms of biological role, besides the cephalosporin acylase I activity which converts GL-7ACA into 7-ACA; this enzyme displays some gamma glutamyltranspeptidase activity. The protein is Acylase ACY 1 proenzyme (acyI) of Pseudomonas sp. (strain SE83).